The following is a 359-amino-acid chain: UPF0283 membrane protein RHECIAT_CH0002430 (359 aa).

The segment at 1–50 is disordered; sequence MSKPPSDPPRRPPAAFAYEDEASEPRNSGRQQQGRRKPESFSENIVVTPD. 2 helical membrane-spanning segments follow: residues 77–97 and 111–131; these read FGKIAAGAFGILLSLGLGLWT and LGYAALGVLAIGILAVLALVI.

This sequence belongs to the UPF0283 family.

Its subcellular location is the cell inner membrane. The sequence is that of UPF0283 membrane protein RHECIAT_CH0002430 from Rhizobium etli (strain CIAT 652).